The following is a 314-amino-acid chain: Lipoyl synthase (314 aa).

The tract at residues 1-24 (MMDTPIIRHPEKVRRPDNPSPRKP) is disordered. Residues Cys53, Cys58, Cys64, Cys79, Cys83, Cys86, and Ser293 each coordinate [4Fe-4S] cluster. The region spanning 65–282 (WKRRHATFMI…ADIARGKGFL (218 aa)) is the Radical SAM core domain. Residues 294–308 (HHADRDFEDLRKARQ) are compositionally biased toward basic and acidic residues. Residues 294-314 (HHADRDFEDLRKARQDAAATK) are disordered.

It belongs to the radical SAM superfamily. Lipoyl synthase family. The cofactor is [4Fe-4S] cluster.

The protein resides in the cytoplasm. The enzyme catalyses [[Fe-S] cluster scaffold protein carrying a second [4Fe-4S](2+) cluster] + N(6)-octanoyl-L-lysyl-[protein] + 2 oxidized [2Fe-2S]-[ferredoxin] + 2 S-adenosyl-L-methionine + 4 H(+) = [[Fe-S] cluster scaffold protein] + N(6)-[(R)-dihydrolipoyl]-L-lysyl-[protein] + 4 Fe(3+) + 2 hydrogen sulfide + 2 5'-deoxyadenosine + 2 L-methionine + 2 reduced [2Fe-2S]-[ferredoxin]. It functions in the pathway protein modification; protein lipoylation via endogenous pathway; protein N(6)-(lipoyl)lysine from octanoyl-[acyl-carrier-protein]: step 2/2. In terms of biological role, catalyzes the radical-mediated insertion of two sulfur atoms into the C-6 and C-8 positions of the octanoyl moiety bound to the lipoyl domains of lipoate-dependent enzymes, thereby converting the octanoylated domains into lipoylated derivatives. In Rhodospirillum rubrum (strain ATCC 11170 / ATH 1.1.1 / DSM 467 / LMG 4362 / NCIMB 8255 / S1), this protein is Lipoyl synthase.